We begin with the raw amino-acid sequence, 97 residues long: Cobalt transport protein CbiN (97 aa).

2 consecutive transmembrane segments (helical) span residues 6–26 and 68–88; these read VLMI…YSGL and SLLF…FFGY.

It belongs to the CbiN family. In terms of assembly, forms an energy-coupling factor (ECF) transporter complex composed of an ATP-binding protein (A component, CbiO), a transmembrane protein (T component, CbiQ) and 2 possible substrate-capture proteins (S components, CbiM and CbiN) of unknown stoichimetry.

It is found in the cell membrane. Its pathway is cofactor biosynthesis; adenosylcobalamin biosynthesis. Its function is as follows. Part of the energy-coupling factor (ECF) transporter complex CbiMNOQ involved in cobalt import. The sequence is that of Cobalt transport protein CbiN from Methanococcus maripaludis (strain C6 / ATCC BAA-1332).